We begin with the raw amino-acid sequence, 258 residues long: uncharacterized protein (258 aa).

Transmembrane regions (helical) follow at residues 21 to 41 (LIWL…TIYY), 73 to 93 (LSQF…GSVA), 119 to 139 (WLIQ…LAYY), 153 to 173 (FAAS…AGLA), 182 to 202 (GAAA…VSLF), and 229 to 249 (FFGW…VFSV).

The protein localises to the cell membrane. This is an uncharacterized protein from Bacillus subtilis (strain 168).